The following is a 257-amino-acid chain: Granzyme M (257 aa).

The signal sequence occupies residues 1–23 (MEACVSSLLVLALGALSVGSSFG). The propeptide at 24-25 (TQ) is activation peptide. The Peptidase S1 domain maps to 26–254 (IIGGREVIPH…YVSWIRKVTG (229 aa)). A disulfide bridge links Cys-51 with Cys-67. Catalysis depends on charge relay system residues His-66 and Asp-111. 3 disulfide bridges follow: Cys-145-Cys-213, Cys-176-Cys-192, and Cys-203-Cys-230. The N-linked (GlcNAc...) asparagine glycan is linked to Asn-177. The Charge relay system role is filled by Ser-207.

The protein belongs to the peptidase S1 family. Granzyme subfamily. Highly and constitutively expressed in activated natural killer (NK) cells.

It localises to the secreted. The protein localises to the cytoplasmic granule. Functionally, cleaves peptide substrates after methionine, leucine, and norleucine. Physiological substrates include EZR, alpha-tubulins and the apoptosis inhibitor BIRC5/Survivin. Promotes caspase activation and subsequent apoptosis of target cells. The polypeptide is Granzyme M (GZMM) (Homo sapiens (Human)).